Here is a 468-residue protein sequence, read N- to C-terminus: 3-isopropylmalate dehydratase large subunit (468 aa).

The [4Fe-4S] cluster site is built by cysteine 347, cysteine 407, and cysteine 410.

This sequence belongs to the aconitase/IPM isomerase family. LeuC type 1 subfamily. Heterodimer of LeuC and LeuD. Requires [4Fe-4S] cluster as cofactor.

It catalyses the reaction (2R,3S)-3-isopropylmalate = (2S)-2-isopropylmalate. It participates in amino-acid biosynthesis; L-leucine biosynthesis; L-leucine from 3-methyl-2-oxobutanoate: step 2/4. Functionally, catalyzes the isomerization between 2-isopropylmalate and 3-isopropylmalate, via the formation of 2-isopropylmaleate. In Prochlorococcus marinus (strain AS9601), this protein is 3-isopropylmalate dehydratase large subunit.